The primary structure comprises 358 residues: MYDRLQAVEDRYDELNELLSDPDVVSDPKRLRDLSKEQSGITATVETYREYKNVNEQIDETRELLGEKLDDEMREMAKEEFAELQKEKAELEERLKLLLVPKDPNDDKNVILEIRGAAGGDEAALFAGDLFRMYSKYAESRGWKVEIMDANPTGIGGYKEIIAMMNGNDAFSRMKYENGAHRVQRVPETESGGRIHTSTATVAILPEAEEVEIELHDKDIRTDTFASTGAGGQSVNTTMSAVRLTHIPTGIVVSMQDERSQLKNKDKAMKVLRARVYDKFEREAREEYDANRKSAVGTGDRSERIRTYNYPQNRVTDHRIGLTIQKLDQIMEGKLDEIIDALILEDQTSKLEHLNDAN.

Gln233 is modified (N5-methylglutamine).

It belongs to the prokaryotic/mitochondrial release factor family. Post-translationally, methylated by PrmC. Methylation increases the termination efficiency of RF1.

It is found in the cytoplasm. Its function is as follows. Peptide chain release factor 1 directs the termination of translation in response to the peptide chain termination codons UAG and UAA. The polypeptide is Peptide chain release factor 1 (Listeria innocua serovar 6a (strain ATCC BAA-680 / CLIP 11262)).